Consider the following 149-residue polypeptide: D-aminoacyl-tRNA deacylase (149 aa).

A Gly-cisPro motif, important for rejection of L-amino acids motif is present at residues 137–138 (GP).

Belongs to the DTD family. As to quaternary structure, homodimer.

It is found in the cytoplasm. The catalysed reaction is glycyl-tRNA(Ala) + H2O = tRNA(Ala) + glycine + H(+). The enzyme catalyses a D-aminoacyl-tRNA + H2O = a tRNA + a D-alpha-amino acid + H(+). An aminoacyl-tRNA editing enzyme that deacylates mischarged D-aminoacyl-tRNAs. Also deacylates mischarged glycyl-tRNA(Ala), protecting cells against glycine mischarging by AlaRS. Acts via tRNA-based rather than protein-based catalysis; rejects L-amino acids rather than detecting D-amino acids in the active site. By recycling D-aminoacyl-tRNA to D-amino acids and free tRNA molecules, this enzyme counteracts the toxicity associated with the formation of D-aminoacyl-tRNA entities in vivo and helps enforce protein L-homochirality. The protein is D-aminoacyl-tRNA deacylase of Clostridium botulinum (strain Kyoto / Type A2).